The primary structure comprises 347 residues: MNIINNSENVCTGVKIWLCICCIGILIMVFIGGITRLTHSGLSITEWNPVIGIFPPVTEKMWIAEKIKYMATPEYKYITSNITLTEFKKLYLIEYFHRLLGRIVGLVFLIPFLYFMYKQKLSKNLIHRFILIAFLILVQGVMGWYMVKSGLIDRPHVSHYRLAMHLLLALAIFYLLWKHFLLSVVHQIKCNIKVTNTSVFYIIISLITIQITCGALVAGLNAGLLSKDIPFLSDKVGLNDLLFIKPWWHNIYNNPITVQFIHEVIALLILIIAVITLLVLKVRIFPMYLLLALLLIQLTLGILTFIYNVPIILASLHQVTAFILFASSIYLLHYVKLLQIKYVENKI.

8 consecutive transmembrane segments (helical) span residues 14–34, 96–116, 129–149, 162–182, 199–219, 260–280, 287–307, and 311–331; these read VKIW…IGGI, FHRL…LYFM, FILI…MVKS, LAMH…HFLL, VFYI…LVAG, FIHE…LLVL, MYLL…TFIY, and IILA…SIYL. Residue H262 coordinates heme. H317 serves as a coordination point for heme.

This sequence belongs to the COX15/CtaA family. Type 2 subfamily. In terms of assembly, interacts with CtaB. Heme b serves as cofactor.

The protein resides in the cell membrane. It catalyses the reaction Fe(II)-heme o + 2 A + H2O = Fe(II)-heme a + 2 AH2. The protein operates within porphyrin-containing compound metabolism; heme A biosynthesis; heme A from heme O: step 1/1. Functionally, catalyzes the conversion of heme O to heme A by two successive hydroxylations of the methyl group at C8. The first hydroxylation forms heme I, the second hydroxylation results in an unstable dihydroxymethyl group, which spontaneously dehydrates, resulting in the formyl group of heme A. In Ehrlichia ruminantium (strain Gardel), this protein is Heme A synthase.